Consider the following 284-residue polypeptide: Bifunctional protein FolD (284 aa).

166 to 168 (GAS) contributes to the NADP(+) binding site.

It belongs to the tetrahydrofolate dehydrogenase/cyclohydrolase family. Homodimer.

It catalyses the reaction (6R)-5,10-methylene-5,6,7,8-tetrahydrofolate + NADP(+) = (6R)-5,10-methenyltetrahydrofolate + NADPH. The enzyme catalyses (6R)-5,10-methenyltetrahydrofolate + H2O = (6R)-10-formyltetrahydrofolate + H(+). Its pathway is one-carbon metabolism; tetrahydrofolate interconversion. Functionally, catalyzes the oxidation of 5,10-methylenetetrahydrofolate to 5,10-methenyltetrahydrofolate and then the hydrolysis of 5,10-methenyltetrahydrofolate to 10-formyltetrahydrofolate. The sequence is that of Bifunctional protein FolD from Nitrosococcus oceani (strain ATCC 19707 / BCRC 17464 / JCM 30415 / NCIMB 11848 / C-107).